A 441-amino-acid polypeptide reads, in one-letter code: Importin subunit alpha-8 (441 aa).

ARM repeat units follow at residues 39–79 (QRDI…NIAV), 80–118 (DNPG…NVAG), 121–158 (IHYR…NLCR), 160–199 (KPHP…HLSE), 202–241 (EDGI…AMTA), 244–284 (HQQT…NITA), 287–326 (KEQI…NMAL), and 330–370 (HDQI…NMLK).

Belongs to the importin alpha family. Forms a complex with importin subunit beta-1.

It localises to the nucleus envelope. Its function is as follows. Binds to conventional NLS motifs and mediates nuclear protein import across the nuclear envelope. The protein is Importin subunit alpha-8 of Arabidopsis thaliana (Mouse-ear cress).